An 86-amino-acid polypeptide reads, in one-letter code: Small ribosomal subunit protein uS15 (86 aa).

The protein belongs to the universal ribosomal protein uS15 family. Part of the 30S ribosomal subunit. Forms a bridge to the 50S subunit in the 70S ribosome, contacting the 23S rRNA.

Functionally, one of the primary rRNA binding proteins, it binds directly to 16S rRNA where it helps nucleate assembly of the platform of the 30S subunit by binding and bridging several RNA helices of the 16S rRNA. Its function is as follows. Forms an intersubunit bridge (bridge B4) with the 23S rRNA of the 50S subunit in the ribosome. In Endomicrobium trichonymphae, this protein is Small ribosomal subunit protein uS15.